A 273-amino-acid chain; its full sequence is Dermonecrotic toxin LsaSicTox-alphaIB1aiii (273 aa).

His-5 is a catalytic residue. Mg(2+) is bound by residues Glu-25 and Asp-27. Residue His-41 is the Nucleophile of the active site. Disulfide bonds link Cys-45–Cys-51 and Cys-47–Cys-190. Residue Asp-85 coordinates Mg(2+).

The protein belongs to the arthropod phospholipase D family. Class II subfamily. Mg(2+) is required as a cofactor. Expressed by the venom gland.

It is found in the secreted. The catalysed reaction is an N-(acyl)-sphingosylphosphocholine = an N-(acyl)-sphingosyl-1,3-cyclic phosphate + choline. It catalyses the reaction an N-(acyl)-sphingosylphosphoethanolamine = an N-(acyl)-sphingosyl-1,3-cyclic phosphate + ethanolamine. The enzyme catalyses a 1-acyl-sn-glycero-3-phosphocholine = a 1-acyl-sn-glycero-2,3-cyclic phosphate + choline. It carries out the reaction a 1-acyl-sn-glycero-3-phosphoethanolamine = a 1-acyl-sn-glycero-2,3-cyclic phosphate + ethanolamine. Its function is as follows. Dermonecrotic toxins cleave the phosphodiester linkage between the phosphate and headgroup of certain phospholipids (sphingolipid and lysolipid substrates), forming an alcohol (often choline) and a cyclic phosphate. This toxin acts on sphingomyelin (SM). It may also act on ceramide phosphoethanolamine (CPE), lysophosphatidylcholine (LPC) and lysophosphatidylethanolamine (LPE), but not on lysophosphatidylserine (LPS), and lysophosphatidylglycerol (LPG). It acts by transphosphatidylation, releasing exclusively cyclic phosphate products as second products. Induces dermonecrosis, hemolysis, increased vascular permeability, edema, inflammatory response, and platelet aggregation. This chain is Dermonecrotic toxin LsaSicTox-alphaIB1aiii, found in Loxosceles sabina (Tucson recluse spider).